An 804-amino-acid chain; its full sequence is Phenylalanine--tRNA ligase beta subunit (804 aa).

Residues 40–155 enclose the tRNA-binding domain; it reads GEGIKGVVIG…NDAETGSDAL (116 aa). In terms of domain architecture, B5 spans 409–484; the sequence is IEANNIHVSA…RLYGYDNIPS (76 aa). Positions 462, 468, 471, and 472 each coordinate Mg(2+). The FDX-ACB domain maps to 710–803; the sequence is PKYPSVTRDI…LEDTYQAVLR (94 aa).

Belongs to the phenylalanyl-tRNA synthetase beta subunit family. Type 1 subfamily. Tetramer of two alpha and two beta subunits. Mg(2+) is required as a cofactor.

It is found in the cytoplasm. The catalysed reaction is tRNA(Phe) + L-phenylalanine + ATP = L-phenylalanyl-tRNA(Phe) + AMP + diphosphate + H(+). The sequence is that of Phenylalanine--tRNA ligase beta subunit (pheT) from Bacillus subtilis (strain 168).